Consider the following 434-residue polypeptide: Glutamate-1-semialdehyde 2,1-aminomutase (434 aa).

Lys266 carries the post-translational modification N6-(pyridoxal phosphate)lysine.

Belongs to the class-III pyridoxal-phosphate-dependent aminotransferase family. HemL subfamily. Homodimer. Pyridoxal 5'-phosphate serves as cofactor.

It is found in the cytoplasm. The enzyme catalyses (S)-4-amino-5-oxopentanoate = 5-aminolevulinate. The protein operates within porphyrin-containing compound metabolism; protoporphyrin-IX biosynthesis; 5-aminolevulinate from L-glutamyl-tRNA(Glu): step 2/2. In Psychrobacter sp. (strain PRwf-1), this protein is Glutamate-1-semialdehyde 2,1-aminomutase.